Reading from the N-terminus, the 201-residue chain is Small ribosomal subunit protein uS4c (201 aa).

One can recognise an S4 RNA-binding domain in the interval 89-149 (MRLDNILFRL…DKPKSGALIK (61 aa)).

Belongs to the universal ribosomal protein uS4 family. In terms of assembly, part of the 30S ribosomal subunit. Contacts protein S5. The interaction surface between S4 and S5 is involved in control of translational fidelity.

It is found in the plastid. One of the primary rRNA binding proteins, it binds directly to 16S rRNA where it nucleates assembly of the body of the 30S subunit. In terms of biological role, with S5 and S12 plays an important role in translational accuracy. This chain is Small ribosomal subunit protein uS4c (rps4), found in Cuscuta exaltata (Tall dodder).